The following is a 691-amino-acid chain: Elongation factor G (691 aa).

The 275-residue stretch at 8 to 282 (ERVRNIGIAA…AVIDYLPAPI (275 aa)) folds into the tr-type G domain. Residues 17 to 24 (AHIDAGKT), 81 to 85 (DTPGH), and 135 to 138 (NKMD) contribute to the GTP site.

This sequence belongs to the TRAFAC class translation factor GTPase superfamily. Classic translation factor GTPase family. EF-G/EF-2 subfamily.

Its subcellular location is the cytoplasm. Catalyzes the GTP-dependent ribosomal translocation step during translation elongation. During this step, the ribosome changes from the pre-translocational (PRE) to the post-translocational (POST) state as the newly formed A-site-bound peptidyl-tRNA and P-site-bound deacylated tRNA move to the P and E sites, respectively. Catalyzes the coordinated movement of the two tRNA molecules, the mRNA and conformational changes in the ribosome. The polypeptide is Elongation factor G (Prochlorococcus marinus (strain SARG / CCMP1375 / SS120)).